Consider the following 219-residue polypeptide: Glucagon-2 (219 aa).

A signal peptide spans 1-20 (MKSTCYMIGILLLILQNTYQ). Propeptides lie at residues 21-50 (SPVP…LKEV), 84-95 (SGGLSRRNADYE), 136-140 (NAEIE), 175-178 (IRYS), and 213-219 (KDLLEEH). Positions 23–43 (VPEADGSSRSVKAARNEAVDD) are disordered.

It belongs to the glucagon family.

It localises to the secreted. In terms of biological role, promotes hydrolysis of glycogen and lipids, and raises the blood sugar level. This chain is Glucagon-2 (gcg2), found in Xenopus laevis (African clawed frog).